Here is a 389-residue protein sequence, read N- to C-terminus: S-adenosylmethionine synthase (389 aa).

His17 serves as a coordination point for ATP. Residue Asp19 coordinates Mg(2+). Glu45 lines the K(+) pocket. 2 residues coordinate L-methionine: Glu58 and Gln101. The tract at residues 101 to 111 (QSPDIAQGVTE) is flexible loop. Residues 168–170 (DSK), 234–235 (RF), Asp243, 249–250 (RK), Ala266, and Lys270 contribute to the ATP site. Asp243 is a binding site for L-methionine. Lys274 contacts L-methionine.

This sequence belongs to the AdoMet synthase family. Homotetramer; dimer of dimers. Mg(2+) is required as a cofactor. It depends on K(+) as a cofactor.

It is found in the cytoplasm. It carries out the reaction L-methionine + ATP + H2O = S-adenosyl-L-methionine + phosphate + diphosphate. The protein operates within amino-acid biosynthesis; S-adenosyl-L-methionine biosynthesis; S-adenosyl-L-methionine from L-methionine: step 1/1. Its function is as follows. Catalyzes the formation of S-adenosylmethionine (AdoMet) from methionine and ATP. The overall synthetic reaction is composed of two sequential steps, AdoMet formation and the subsequent tripolyphosphate hydrolysis which occurs prior to release of AdoMet from the enzyme. The chain is S-adenosylmethionine synthase from Geotalea uraniireducens (strain Rf4) (Geobacter uraniireducens).